A 358-amino-acid chain; its full sequence is GTPase Obg (358 aa).

One can recognise an Obg domain in the interval 1-159 (MKFVDEVTIR…RNLHLELRLL (159 aa)). In terms of domain architecture, OBG-type G spans 160–334 (ADVGLLGMPN…LAQDVMNRLE (175 aa)). GTP-binding positions include 166–173 (GMPNAGKS), 191–195 (FTTLY), 213–216 (DIPG), 284–287 (NKLD), and 315–317 (SAL). Mg(2+)-binding residues include S173 and T193. Residues 337-358 (DEEAREAGERARREQRQEEGPE) are disordered. Residues 341-358 (REAGERARREQRQEEGPE) are compositionally biased toward basic and acidic residues.

The protein belongs to the TRAFAC class OBG-HflX-like GTPase superfamily. OBG GTPase family. As to quaternary structure, monomer. It depends on Mg(2+) as a cofactor.

It localises to the cytoplasm. Its function is as follows. An essential GTPase which binds GTP, GDP and possibly (p)ppGpp with moderate affinity, with high nucleotide exchange rates and a fairly low GTP hydrolysis rate. Plays a role in control of the cell cycle, stress response, ribosome biogenesis and in those bacteria that undergo differentiation, in morphogenesis control. This chain is GTPase Obg, found in Alkalilimnicola ehrlichii (strain ATCC BAA-1101 / DSM 17681 / MLHE-1).